The sequence spans 285 residues: Ribonuclease H1 (285 aa).

The disordered stretch occupies residues 72–122; sequence RSSSSPDGSKGQESAHVQKLQVKTSKRPREPLGEEEEPPEPGAKHTRQDTE. In terms of domain architecture, RNase H type-1 spans 135–281; it reads MGESVVVYTD…ADRLAREGAK (147 aa). Residues Asp-144, Glu-185, Asp-209, and Asp-273 each contribute to the Mg(2+) site.

This sequence belongs to the RNase H family. Monomer. The cofactor is Mg(2+).

It is found in the cytoplasm. The catalysed reaction is Endonucleolytic cleavage to 5'-phosphomonoester.. With respect to regulation, in the presence of magnesium, manganese is inhibitory. Its function is as follows. Endonuclease that specifically degrades the RNA of RNA-DNA hybrids. Plays a role in RNA polymerase II (RNAp II) transcription termination by degrading R-loop RNA-DNA hybrid formation at G-rich pause sites located downstream of the poly(A) site and behind the elongating RNAp II. The polypeptide is Ribonuclease H1 (Rnaseh1) (Rattus norvegicus (Rat)).